We begin with the raw amino-acid sequence, 571 residues long: Proline--tRNA ligase (571 aa).

This sequence belongs to the class-II aminoacyl-tRNA synthetase family. ProS type 1 subfamily. As to quaternary structure, homodimer.

It is found in the cytoplasm. The catalysed reaction is tRNA(Pro) + L-proline + ATP = L-prolyl-tRNA(Pro) + AMP + diphosphate. Catalyzes the attachment of proline to tRNA(Pro) in a two-step reaction: proline is first activated by ATP to form Pro-AMP and then transferred to the acceptor end of tRNA(Pro). As ProRS can inadvertently accommodate and process non-cognate amino acids such as alanine and cysteine, to avoid such errors it has two additional distinct editing activities against alanine. One activity is designated as 'pretransfer' editing and involves the tRNA(Pro)-independent hydrolysis of activated Ala-AMP. The other activity is designated 'posttransfer' editing and involves deacylation of mischarged Ala-tRNA(Pro). The misacylated Cys-tRNA(Pro) is not edited by ProRS. This chain is Proline--tRNA ligase, found in Shewanella baltica (strain OS195).